The primary structure comprises 809 residues: Lon protease (809 aa).

The Lon N-terminal domain occupies leucine 20–serine 216. Glycine 369–threonine 376 contacts ATP. Positions glutamate 606 to serine 787 constitute a Lon proteolytic domain. Catalysis depends on residues serine 693 and lysine 736.

Belongs to the peptidase S16 family. As to quaternary structure, homohexamer. Organized in a ring with a central cavity.

The protein localises to the cytoplasm. It carries out the reaction Hydrolysis of proteins in presence of ATP.. ATP-dependent serine protease that mediates the selective degradation of mutant and abnormal proteins as well as certain short-lived regulatory proteins. Required for cellular homeostasis and for survival from DNA damage and developmental changes induced by stress. Degrades polypeptides processively to yield small peptide fragments that are 5 to 10 amino acids long. Binds to DNA in a double-stranded, site-specific manner. The sequence is that of Lon protease from Acinetobacter baumannii (strain AB307-0294).